Reading from the N-terminus, the 1234-residue chain is uncharacterized protein (1234 aa).

This is an uncharacterized protein from Schizosaccharomyces pombe (strain 972 / ATCC 24843) (Fission yeast).